The primary structure comprises 238 residues: Orotidine 5'-phosphate decarboxylase (238 aa).

Substrate-binding positions include Asp10, Lys32, 59-68 (DLKLHDIPNT), Thr122, Arg184, Gln193, Gly213, and Arg214. The active-site Proton donor is Lys61.

Belongs to the OMP decarboxylase family. Type 1 subfamily. Homodimer.

It carries out the reaction orotidine 5'-phosphate + H(+) = UMP + CO2. It functions in the pathway pyrimidine metabolism; UMP biosynthesis via de novo pathway; UMP from orotate: step 2/2. In terms of biological role, catalyzes the decarboxylation of orotidine 5'-monophosphate (OMP) to uridine 5'-monophosphate (UMP). This Bacillus cereus (strain ZK / E33L) protein is Orotidine 5'-phosphate decarboxylase.